Here is a 410-residue protein sequence, read N- to C-terminus: MSQFVFTSESVTEGHPDKICDQISDAVLDALLTQDPHSRVACEAVVNTGLCLITGEVTSTAEVDFINLVRSVIKEIGYKDAQAGGFDANSCAVLVALDKQSPDIAKGVDTAEDHTDDPFDKIGAGDQGIMFGYACNETPELMPLPISLAHRLARQLAKIRHQGTLKYLLPDGKTQVSVIYENNEPIAIDTIVISTQHTSEIDDLSSEADIRERITKDLWEYVVKPATSDLKLQPNQEKTRFLVNPTGKFVVGGPQGDAGLTGRKIIVDTYGGYARHGGGAFSGKDPTKVDRSAAYAARFVAKSIVAAKLAKRVEVQLSYAIGVANPVSILVEAYGSGKMSNQELTKVVKKHFDLRPGAIIEQFNLKNLPSKRSGRFYRDTAAYGHFGRPDLNLPWEKVDEKAKELIALHN.

His15 serves as a coordination point for ATP. Asp17 contributes to the Mg(2+) binding site. Glu43 is a K(+) binding site. Residues Glu56 and Gln100 each coordinate L-methionine. The interval 100–110 (QSPDIAKGVDT) is flexible loop. Residues 171-173 (DGK), 248-249 (KF), Asp257, 263-264 (RK), Ala280, and Lys284 each bind ATP. Asp257 is an L-methionine binding site. An L-methionine-binding site is contributed by Lys288.

It belongs to the AdoMet synthase family. As to quaternary structure, homotetramer; dimer of dimers. The cofactor is Mg(2+). K(+) serves as cofactor.

The protein resides in the cytoplasm. The enzyme catalyses L-methionine + ATP + H2O = S-adenosyl-L-methionine + phosphate + diphosphate. It participates in amino-acid biosynthesis; S-adenosyl-L-methionine biosynthesis; S-adenosyl-L-methionine from L-methionine: step 1/1. Its function is as follows. Catalyzes the formation of S-adenosylmethionine (AdoMet) from methionine and ATP. The overall synthetic reaction is composed of two sequential steps, AdoMet formation and the subsequent tripolyphosphate hydrolysis which occurs prior to release of AdoMet from the enzyme. This chain is S-adenosylmethionine synthase, found in Prochlorococcus marinus (strain MIT 9211).